The chain runs to 245 residues: 1-(5-phosphoribosyl)-5-[(5-phosphoribosylamino)methylideneamino] imidazole-4-carboxamide isomerase (245 aa).

Asp7 acts as the Proton acceptor in catalysis. The Proton donor role is filled by Asp129.

The protein belongs to the HisA/HisF family.

Its subcellular location is the cytoplasm. The catalysed reaction is 1-(5-phospho-beta-D-ribosyl)-5-[(5-phospho-beta-D-ribosylamino)methylideneamino]imidazole-4-carboxamide = 5-[(5-phospho-1-deoxy-D-ribulos-1-ylimino)methylamino]-1-(5-phospho-beta-D-ribosyl)imidazole-4-carboxamide. It participates in amino-acid biosynthesis; L-histidine biosynthesis; L-histidine from 5-phospho-alpha-D-ribose 1-diphosphate: step 4/9. In Aliivibrio fischeri (strain ATCC 700601 / ES114) (Vibrio fischeri), this protein is 1-(5-phosphoribosyl)-5-[(5-phosphoribosylamino)methylideneamino] imidazole-4-carboxamide isomerase.